The sequence spans 297 residues: Cell division protein FtsX (297 aa).

Topologically, residues 1–24 (MKAKTLSRHLREGVKNLSRNGWMT) are cytoplasmic. The chain crosses the membrane as a helical span at residues 25–45 (FASVSAVTVTLLLVGVFLTAI). Topologically, residues 46-171 (MNMNHFATKV…LFDTVKTGRN (126 aa)) are extracellular. The chain crosses the membrane as a helical span at residues 172 to 192 (IGIVLIAGLLFTAMFLISNTI). Over 193–219 (KITIYARSTEIEIMKLVGATNWFIRWP) the chain is Cytoplasmic. A helical membrane pass occupies residues 220 to 240 (FLLEGLFLGVLGSIIPIGLIL). Residues 241–270 (VTYNSLQGMFNEKLGGTIFELLPYSPFVFQ) are Extracellular-facing. The helical transmembrane segment at 271–291 (LAGLLVLIGALIGMWGSVMSI) threads the bilayer. Residues 292–297 (RRFLKV) are Cytoplasmic-facing.

This sequence belongs to the ABC-4 integral membrane protein family. FtsX subfamily. In terms of assembly, interacts with FtsE.

It localises to the cell membrane. In terms of biological role, part of the ABC transporter FtsEX involved in asymmetric cellular division facilitating the initiation of sporulation. The sequence is that of Cell division protein FtsX from Bacillus anthracis.